A 299-amino-acid polypeptide reads, in one-letter code: Aspartate carbamoyltransferase catalytic subunit (299 aa).

Residues Arg51 and Thr52 each coordinate carbamoyl phosphate. L-aspartate is bound at residue Lys80. Carbamoyl phosphate-binding residues include Arg101, His129, and Gln132. L-aspartate is bound by residues Arg162 and Arg221. The carbamoyl phosphate site is built by Leu260 and Pro261.

It belongs to the aspartate/ornithine carbamoyltransferase superfamily. ATCase family. Heterooligomer of catalytic and regulatory chains.

It carries out the reaction carbamoyl phosphate + L-aspartate = N-carbamoyl-L-aspartate + phosphate + H(+). Its pathway is pyrimidine metabolism; UMP biosynthesis via de novo pathway; (S)-dihydroorotate from bicarbonate: step 2/3. Catalyzes the condensation of carbamoyl phosphate and aspartate to form carbamoyl aspartate and inorganic phosphate, the committed step in the de novo pyrimidine nucleotide biosynthesis pathway. The polypeptide is Aspartate carbamoyltransferase catalytic subunit (Sulfolobus acidocaldarius (strain ATCC 33909 / DSM 639 / JCM 8929 / NBRC 15157 / NCIMB 11770)).